Consider the following 237-residue polypeptide: MFDGEAIRWFEFFVPTNSTLWMAIGVLMIALLMVVGTLRRAIVPGRIQSLAELTYGFIHKMVEDVAGKDGLVYFPYIFTLFLFILFSNFLGLIPMAFTPTSHIAVTGVMAMGVFIGVTALGFMKHGSHFLNLFWVSAAPLPLRPILAVIEVISYFVRPVSHSIRLAGNMMAGHAVMEVFAAFAPLILFSFVGVIVTPLSVLAIVAMYALEILVAFVQAYVFTILTCVYLKDALHPGH.

The next 6 membrane-spanning stretches (helical) occupy residues 18 to 38 (STLWMAIGVLMIALLMVVGTL), 77 to 97 (IFTLFLFILFSNFLGLIPMAF), 103 to 123 (IAVTGVMAMGVFIGVTALGFM), 132 to 152 (LFWVSAAPLPLRPILAVIEVI), 185 to 205 (LILFSFVGVIVTPLSVLAIVA), and 209 to 229 (LEILVAFVQAYVFTILTCVYL).

Belongs to the ATPase A chain family. As to quaternary structure, F-type ATPases have 2 components, CF(1) - the catalytic core - and CF(0) - the membrane proton channel. CF(1) has five subunits: alpha(3), beta(3), gamma(1), delta(1), epsilon(1). CF(0) has three main subunits: a(1), b(2) and c(9-12). The alpha and beta chains form an alternating ring which encloses part of the gamma chain. CF(1) is attached to CF(0) by a central stalk formed by the gamma and epsilon chains, while a peripheral stalk is formed by the delta and b chains.

It is found in the cellular chromatophore membrane. Its function is as follows. Key component of the proton channel; it plays a direct role in the translocation of protons across the membrane. This Rhodobacter capsulatus (Rhodopseudomonas capsulata) protein is ATP synthase subunit a.